A 911-amino-acid polypeptide reads, in one-letter code: MDNNPNINECIPYNCLSNPEVEVLGGERIETGYTPIDISLSLTQFLLSEFVPGAGFVLGLVDIIWEIFSVLSSDAFLVQIEQLINQRIEEFARNQAISRLEGLSNLYQIYAESFREWEADPTNPALREEMRIQFNDMNSALTTAIPLFAVQNYQVPLLSVYVTCNYIISSESVMCGQRSGFDAATINSRYNDLTRLIGNYTDHAVRWYNTGLERVWGPDSRDWIRYNQFRRELTLTVLDIVSLFPNYDSRTYPIRTVSQLTREIYTNPVLENFDGSFRGSAQGIEGSIRSPHLMDILNSITIYTDAHRGEYYWSGHQIMASPVGFSGPEFTFPLYGTMGNSAPQQRIVAQLGQGVYRTLSSTLYRRPFNIGINNQQLSVLDGTEFAYGTSSNLPSAVYRKSGTVDSLDEIPPQNNNVPPRQGFSHRLSHVSMFRSGFSNSSVSIIRAPMFSWIHRSAEFNNIIPSSQITQIPLTKSTNLGSGTSVVKGPGFTGGDILRRTSPGQISTLRVNITAPLSQRYRVRILYASTTNLQFHTSIDGRPINQGNFSATMSSGRNLQSGSLRTVGFTTPFNFSNGSSVFTLSAHVFNSGNEVYIDRIEFVPAEVTFEAEYDLERAQKAVNELFTSSNQIGLKTDVTDYHIDQVSNLVECLSDEFCLDEKKELSEKVKHAKRLSDERNLLQDPNFRGINRQLDRGWRRSTDITTQGGDDFFQENYVTLLGTLMGFPSIYIKKWWFEIKSLYPLPIRGYIEDSQDLEIYLIRYNAKHETVNVPGTVPYGRFQPQVPIGKCAHHSHHFSLDIDVGCTDLNEDLGVWVIFKIKTQDGHARLGNLEFLEEKPLVGEALARVKRAEKKWRDKREKLEWETNIVYKEAKESVDALFVNSQYDRLQADTNIAMIHAADKRVHSIREA.

It belongs to the delta endotoxin family.

Functionally, promotes colloidosmotic lysis by binding to the midgut epithelial cells of both dipteran and lepidopteran larvae. In Bacillus thuringiensis, this protein is Pesticidal crystal protein Cry1Af (cry1Af).